The chain runs to 463 residues: ATP-dependent protease ATPase subunit HslU (463 aa).

Residues Val-21, Gly-63 to Glu-68, Asp-276, Glu-341, and Arg-413 each bind ATP.

This sequence belongs to the ClpX chaperone family. HslU subfamily. A double ring-shaped homohexamer of HslV is capped on each side by a ring-shaped HslU homohexamer. The assembly of the HslU/HslV complex is dependent on binding of ATP.

Its subcellular location is the cytoplasm. Functionally, ATPase subunit of a proteasome-like degradation complex; this subunit has chaperone activity. The binding of ATP and its subsequent hydrolysis by HslU are essential for unfolding of protein substrates subsequently hydrolyzed by HslV. HslU recognizes the N-terminal part of its protein substrates and unfolds these before they are guided to HslV for hydrolysis. This chain is ATP-dependent protease ATPase subunit HslU, found in Thermotoga neapolitana (strain ATCC 49049 / DSM 4359 / NBRC 107923 / NS-E).